A 405-amino-acid polypeptide reads, in one-letter code: Tryptophan synthase beta chain (405 aa).

N6-(pyridoxal phosphate)lysine is present on lysine 95.

The protein belongs to the TrpB family. As to quaternary structure, tetramer of two alpha and two beta chains. Pyridoxal 5'-phosphate serves as cofactor.

It carries out the reaction (1S,2R)-1-C-(indol-3-yl)glycerol 3-phosphate + L-serine = D-glyceraldehyde 3-phosphate + L-tryptophan + H2O. Its pathway is amino-acid biosynthesis; L-tryptophan biosynthesis; L-tryptophan from chorismate: step 5/5. The beta subunit is responsible for the synthesis of L-tryptophan from indole and L-serine. The sequence is that of Tryptophan synthase beta chain from Pseudomonas entomophila (strain L48).